Consider the following 114-residue polypeptide: Adapter SH3BGRL (114 aa).

The segment at 13–50 is required for interaction with HER2; the sequence is STAIKKKQQDVLGFLEANKIGFEEKDIAANEENRKWMR. Residues 54-71 form a required for interaction with PFN1, HER2, and ATG12 region; sequence PENSRPATGYPLPPQIFN. Residues 61-67 carry the SH3-binding motif; that stretch reads TGYPLPP.

It belongs to the SH3BGR family. As to quaternary structure, monomer. Interacts with PFN1/Profilin-1. Interacts with ERBB2. Interacts with ATG12. Interacts with BECN1. Interacts with translating ribosomes. In terms of tissue distribution, ubiquitous.

It is found in the cytoplasm. It localises to the cytosol. Its subcellular location is the cell membrane. Its function is as follows. Appears to function as an adapter protein that bridges proteins together or proteins with mRNAs. May function as a ubiquitin ligase-substrate adapter. Additionally, associates with translating cytoplasmic ribosomes and may promote the expression of specific mRNAs. This chain is Adapter SH3BGRL, found in Homo sapiens (Human).